The sequence spans 338 residues: Glyceraldehyde-3-phosphate dehydrogenase (338 aa).

Residues 13–14 (RI), aspartate 35, and arginine 80 contribute to the NAD(+) site. D-glyceraldehyde 3-phosphate-binding positions include 151–153 (SCT), threonine 182, 211–212 (TG), and arginine 234. The active-site Nucleophile is cysteine 152. Asparagine 316 serves as a coordination point for NAD(+).

It belongs to the glyceraldehyde-3-phosphate dehydrogenase family. Homotetramer.

Its subcellular location is the cytoplasm. It catalyses the reaction D-glyceraldehyde 3-phosphate + phosphate + NAD(+) = (2R)-3-phospho-glyceroyl phosphate + NADH + H(+). Its pathway is carbohydrate degradation; glycolysis; pyruvate from D-glyceraldehyde 3-phosphate: step 1/5. This Sclerotinia sclerotiorum (White mold) protein is Glyceraldehyde-3-phosphate dehydrogenase (GPD).